The chain runs to 32 residues: Photosystem II reaction center protein Psb30 (32 aa).

The helical transmembrane segment at 3 to 23 (IVIVQLGSLALITLAGPIIIV) threads the bilayer.

It belongs to the Psb30/Ycf12 family. PSII is composed of 1 copy each of membrane proteins PsbA, PsbB, PsbC, PsbD, PsbE, PsbF, PsbH, PsbI, PsbJ, PsbK, PsbL, PsbM, PsbT, PsbY, PsbZ, Psb30/Ycf12, peripheral proteins of the oxygen-evolving complex and a large number of cofactors. It forms dimeric complexes.

The protein localises to the plastid. Its subcellular location is the chloroplast thylakoid membrane. A core subunit of photosystem II (PSII), probably helps stabilize the reaction center. The protein is Photosystem II reaction center protein Psb30 of Euglena viridis (Cercaria viridis).